A 136-amino-acid polypeptide reads, in one-letter code: Large ribosomal subunit protein bL17 (136 aa).

The protein belongs to the bacterial ribosomal protein bL17 family. Part of the 50S ribosomal subunit. Contacts protein L32.

The sequence is that of Large ribosomal subunit protein bL17 from Methylobacterium radiotolerans (strain ATCC 27329 / DSM 1819 / JCM 2831 / NBRC 15690 / NCIMB 10815 / 0-1).